The following is a 123-amino-acid chain: Small ribosomal subunit protein uS13 (123 aa).

Belongs to the universal ribosomal protein uS13 family. Part of the 30S ribosomal subunit. Forms a loose heterodimer with protein S19. Forms two bridges to the 50S subunit in the 70S ribosome.

In terms of biological role, located at the top of the head of the 30S subunit, it contacts several helices of the 16S rRNA. In the 70S ribosome it contacts the 23S rRNA (bridge B1a) and protein L5 of the 50S subunit (bridge B1b), connecting the 2 subunits; these bridges are implicated in subunit movement. Contacts the tRNAs in the A and P-sites. The chain is Small ribosomal subunit protein uS13 from Anaplasma marginale (strain St. Maries).